The sequence spans 511 residues: Histidine ammonia-lyase (511 aa).

The segment at residues 143–145 is a cross-link (5-imidazolinone (Ala-Gly)); that stretch reads ASG. Ser144 is subject to 2,3-didehydroalanine (Ser).

It belongs to the PAL/histidase family. Contains an active site 4-methylidene-imidazol-5-one (MIO), which is formed autocatalytically by cyclization and dehydration of residues Ala-Ser-Gly.

It localises to the cytoplasm. The catalysed reaction is L-histidine = trans-urocanate + NH4(+). Its pathway is amino-acid degradation; L-histidine degradation into L-glutamate; N-formimidoyl-L-glutamate from L-histidine: step 1/3. The sequence is that of Histidine ammonia-lyase from Vibrio parahaemolyticus serotype O3:K6 (strain RIMD 2210633).